We begin with the raw amino-acid sequence, 549 residues long: Glucose-6-phosphate isomerase (549 aa).

Glu-355 functions as the Proton donor in the catalytic mechanism. Catalysis depends on residues His-387 and Lys-515.

This sequence belongs to the GPI family.

The protein resides in the cytoplasm. It carries out the reaction alpha-D-glucose 6-phosphate = beta-D-fructose 6-phosphate. Its pathway is carbohydrate biosynthesis; gluconeogenesis. It participates in carbohydrate degradation; glycolysis; D-glyceraldehyde 3-phosphate and glycerone phosphate from D-glucose: step 2/4. Catalyzes the reversible isomerization of glucose-6-phosphate to fructose-6-phosphate. In Histophilus somni (strain 129Pt) (Haemophilus somnus), this protein is Glucose-6-phosphate isomerase.